Here is a 150-residue protein sequence, read N- to C-terminus: Lipoprotein signal peptidase (150 aa).

3 helical membrane-spanning segments follow: residues 8-28, 58-78, and 81-101; these read FYALVGFLVFLDQVTKYLAHA, GFSWLFFLLGIIALIFIGWFL, and TTGSIVFLALLQGGIAGNVFD. Active-site residues include Asp-116 and Asp-132. The helical transmembrane segment at 126-146 threads the bilayer; that stretch reads VVFNIADLFILAGVFGTFLFL.

This sequence belongs to the peptidase A8 family.

The protein resides in the cell membrane. The enzyme catalyses Release of signal peptides from bacterial membrane prolipoproteins. Hydrolyzes -Xaa-Yaa-Zaa-|-(S,diacylglyceryl)Cys-, in which Xaa is hydrophobic (preferably Leu), and Yaa (Ala or Ser) and Zaa (Gly or Ala) have small, neutral side chains.. Its pathway is protein modification; lipoprotein biosynthesis (signal peptide cleavage). Functionally, this protein specifically catalyzes the removal of signal peptides from prolipoproteins. The protein is Lipoprotein signal peptidase of Tropheryma whipplei (strain TW08/27) (Whipple's bacillus).